A 241-amino-acid polypeptide reads, in one-letter code: Endo-chitosanase B (241 aa).

The first 17 residues, 1-17 (MRLSEILAVALVTGATA), serve as a signal peptide directing secretion. N-linked (GlcNAc...) asparagine glycosylation occurs at Asn-86.

It belongs to the glycosyl hydrolase 75 family.

The protein localises to the secreted. The catalysed reaction is Endohydrolysis of beta-(1-&gt;4)-linkages between D-glucosamine residues in a partly acetylated chitosan.. Its function is as follows. Chitosanase catalyzing the endo-type cleavage of chitosan, the deacylated form of chitin. Chitosanase may be crucial in the degradation of the deacetylated portion of chitin in the fungal cell wall. Chitoolisaccharides produced by the hydrolysis of partially N-acetylated chitosan are known to have many biological activities, including antibacterial activity, immune-enhancing effects, and elicitor activity. This chain is Endo-chitosanase B (csnB), found in Aspergillus oryzae (strain ATCC 42149 / RIB 40) (Yellow koji mold).